A 103-amino-acid polypeptide reads, in one-letter code: MYAVIVTGGKQYKVTEGEFLKIEKLELATGEAVTFDRVLLIGNGDDVKIGAPVVDGAKVVAEVVSQGRHDKVRIIKFRRRKHHMKRQGHRQWFTEIKITGIQA.

This sequence belongs to the bacterial ribosomal protein bL21 family. In terms of assembly, part of the 50S ribosomal subunit. Contacts protein L20.

This protein binds to 23S rRNA in the presence of protein L20. This is Large ribosomal subunit protein bL21 from Ectopseudomonas mendocina (strain ymp) (Pseudomonas mendocina).